The following is a 174-amino-acid chain: Peptide deformylase (174 aa).

The Fe cation site is built by cysteine 96 and histidine 138. Residue glutamate 139 is part of the active site. Residue histidine 142 participates in Fe cation binding.

The protein belongs to the polypeptide deformylase family. Fe(2+) is required as a cofactor.

It catalyses the reaction N-terminal N-formyl-L-methionyl-[peptide] + H2O = N-terminal L-methionyl-[peptide] + formate. Its function is as follows. Removes the formyl group from the N-terminal Met of newly synthesized proteins. Requires at least a dipeptide for an efficient rate of reaction. N-terminal L-methionine is a prerequisite for activity but the enzyme has broad specificity at other positions. The polypeptide is Peptide deformylase (Helicobacter pylori (strain J99 / ATCC 700824) (Campylobacter pylori J99)).